The sequence spans 139 residues: NADH dehydrogenase [ubiquinone] 1 alpha subcomplex subunit MCI4 (139 aa).

This sequence belongs to the complex I NDUFA5 subunit family.

It is found in the mitochondrion inner membrane. Its function is as follows. Accessory subunit of the mitochondrial membrane respiratory chain NADH dehydrogenase (Complex I), that is believed not to be involved in catalysis. Complex I functions in the transfer of electrons from NADH to the respiratory chain. The immediate electron acceptor for the enzyme is believed to be ubiquinone. Involved in osmotic and oxidative resistance, yeast to hypha transition and the ability to damage and invade oral epithelial cells. This chain is NADH dehydrogenase [ubiquinone] 1 alpha subcomplex subunit MCI4, found in Candida albicans (strain SC5314 / ATCC MYA-2876) (Yeast).